We begin with the raw amino-acid sequence, 385 residues long: Nod factor hydrolase protein 1 (385 aa).

The N-terminal stretch at 1 to 21 (MANFLKLKQFLTLVLILLALA) is a signal peptide. The 350-residue stretch at 36–385 (RVKGIYWIEN…TASKAWRPES (350 aa)) folds into the GH18 domain. N-linked (GlcNAc...) asparagine glycosylation is found at Asn115 and Asn134. The active-site Proton donor is Glu153. N-linked (GlcNAc...) asparagine glycosylation is found at Asn233 and Asn247.

The protein belongs to the glycosyl hydrolase 18 family. Chitinase class V subfamily.

Its function is as follows. Symbiotic enzyme that hydrolytically inactivates Nod factors (NFs) with a C16:2 acyl chain produced by the microsymbiont Sinorhizobium meliloti. NFs are lipo-chitooligosaccharide signaling molecules produced by nitrogen-fixing rhizobia to initiate nodulation (symbiosis) on the roots of legumes. Controls NF hydrolysis at the stage of root hair infection. Involved in the regulation of growth and branching of mature nodules. Modulates NF levels and signaling to complete transition of infected nodules to functional nitrogen-fixing organs. Lacks chitinase activity in vitro toward glycol chitin, carboxymethyl-chitin, colloidal chitin, and the chitin oligosaccharides (N-acetylglucosamine) (GlcNAc)6 and (GlcNAc)5. The polypeptide is Nod factor hydrolase protein 1 (Medicago truncatula (Barrel medic)).